The sequence spans 339 residues: Lipoate--protein ligase (339 aa).

One can recognise a BPL/LPL catalytic domain in the interval 31–221 (FLDDDILFPY…QLLQIETISQ (191 aa)). ATP-binding positions include Arg73, 78–81 (GAVY), Lys135, and Ala139. (R)-lipoate is bound at residue Lys135.

The protein belongs to the LplA family.

It carries out the reaction L-lysyl-[lipoyl-carrier protein] + (R)-lipoate + ATP = N(6)-[(R)-lipoyl]-L-lysyl-[lipoyl-carrier protein] + AMP + diphosphate + H(+). Its pathway is protein modification; protein lipoylation via exogenous pathway; protein N(6)-(lipoyl)lysine from lipoate: step 1/2. The protein operates within protein modification; protein lipoylation via exogenous pathway; protein N(6)-(lipoyl)lysine from lipoate: step 2/2. In terms of biological role, catalyzes specifically the lipoylation of GcvH-L (SpyM50867), likely via the ATP-dependent activation of lipoate to lipoyl-AMP and the transfer of the activated lipoyl onto the lipoyl domain of the target protein. The sequence is that of Lipoate--protein ligase from Streptococcus pyogenes serotype M5 (strain Manfredo).